Here is a 617-residue protein sequence, read N- to C-terminus: Protein 4.1 (617 aa).

Residues 1–282 (MHCKVSLLDD…EHHTFFRLTS (282 aa)) enclose the FERM domain. At Tyr13 the chain carries Phosphotyrosine. Position 169 is a phosphothreonine (Thr169). Residues 308–401 (TRQASALIDR…AEPEPSEAWK (94 aa)) form a disordered region. Residues Ser312, Ser331, and Ser333 each carry the phosphoserine modification. The segment covering 348–361 (RPTSAPAIAPSPAA) has biased composition (low complexity). Residues 387-396 (APPEDAEPEP) are compositionally biased toward acidic residues. Residues 401 to 466 (KKKRERLDGE…WDKRLSTHSP (66 aa)) are spectrin--actin-binding. The residue at position 413 (Tyr413) is a Phosphotyrosine; by EGFR. Residues Ser417, Ser427, Ser437, and Ser462 each carry the phosphoserine modification. At Ser465 the chain carries Phosphoserine; by CDK1. Residues 467-617 (FRTLNINGQI…VHQETEISEE (151 aa)) are C-terminal (CTD). A phosphothreonine mark is found at Thr489 and Thr612.

In terms of assembly, binds with a high affinity to glycophorin and with lower affinity to band III protein. Associates with the nuclear mitotic apparatus. Binds calmodulin, CPAP and DLG1. Also found to associate with contractile apparatus and tight junctions. Interacts with NUMA1; this interaction is negatively regulated by CDK1 during metaphase and promotes anaphase-specific localization of NUMA1 in symmetrically dividing cells. Interacts with ATP2B1; regulates small intestinal calcium absorption through regulation of membrane expression of ATP2B1. Phosphorylated at multiple sites by different protein kinases and each phosphorylation event selectively modulates the protein's functions. Post-translationally, phosphorylation on Tyr-413 reduces the ability of 4.1 to promote the assembly of the spectrin/actin/4.1 ternary complex.

It is found in the nucleus. It localises to the cytoplasm. The protein resides in the cytoskeleton. The protein localises to the cell cortex. In terms of biological role, protein 4.1 is a major structural element of the erythrocyte membrane skeleton. It plays a key role in regulating membrane physical properties of mechanical stability and deformability by stabilizing spectrin-actin interaction. Recruits DLG1 to membranes. Required for dynein-dynactin complex and NUMA1 recruitment at the mitotic cell cortex during anaphase. The polypeptide is Protein 4.1 (Bos taurus (Bovine)).